A 180-amino-acid polypeptide reads, in one-letter code: Transcription factor HES-7.1-B (180 aa).

The bHLH domain occupies 13-70 (HRKLLKPLVEKRRRERINNSLEKLRIFLSQTLKSEKLKNPKVEKAEILECTVQFLQSR). In terms of domain architecture, Orange spans 84-116 (YQSGFQHCLETTLHFMNSKPDMNGVTKELLSHQ). The WRPW motif motif lies at 176 to 179 (WRPW).

Transcription repression requires formation of a complex with a corepressor protein of the Groucho/TLE family. As to expression, expressed in the presumptive midbrain-hindbrain boundary (MHB) as early as the early gastrula stage (stage 10.5). Expression in the MHB continues through to tailbud stage. Also transiently expressed in the eye anlage at late neurula stage.

It localises to the nucleus. Transcriptional repressor. Represses transcription from both N box- and E box-containing promoters. Demarcates the prospective midbrain-hindbrain boundary (MHB) region in the neuroectoderm in early gastrulae embryos by repressing transcription of a number of target genes. In Xenopus laevis (African clawed frog), this protein is Transcription factor HES-7.1-B (hes7.1-b).